The chain runs to 92 residues: Cell division protein FtsB (92 aa).

Residues 1 to 3 (MKV) lie on the Cytoplasmic side of the membrane. The helical transmembrane segment at 4 to 21 (VPILLFVLLAALQYRLWF) threads the bilayer. Over 22-92 (GKNSIPEYVA…TFYRILPSEE (71 aa)) the chain is Periplasmic. Residues 31–74 (AMEKSVAEQAEQNTELLQRNNLLKADIQDLKVGLEAVEERARNE) are a coiled coil.

Belongs to the FtsB family. Part of a complex composed of FtsB, FtsL and FtsQ.

The protein resides in the cell inner membrane. Essential cell division protein. May link together the upstream cell division proteins, which are predominantly cytoplasmic, with the downstream cell division proteins, which are predominantly periplasmic. The chain is Cell division protein FtsB from Pseudoalteromonas atlantica (strain T6c / ATCC BAA-1087).